Here is a 778-residue protein sequence, read N- to C-terminus: Endonuclease MutS2 (778 aa).

ATP is bound at residue 328–335 (GPNTGGKT). A Smr domain is found at 702–777 (LDLRGKRYEE…GSGATIVTFK (76 aa)).

This sequence belongs to the DNA mismatch repair MutS family. MutS2 subfamily. In terms of assembly, homodimer. Binds to stalled ribosomes, contacting rRNA.

In terms of biological role, endonuclease that is involved in the suppression of homologous recombination and thus may have a key role in the control of bacterial genetic diversity. Acts as a ribosome collision sensor, splitting the ribosome into its 2 subunits. Detects stalled/collided 70S ribosomes which it binds and splits by an ATP-hydrolysis driven conformational change. Acts upstream of the ribosome quality control system (RQC), a ribosome-associated complex that mediates the extraction of incompletely synthesized nascent chains from stalled ribosomes and their subsequent degradation. Probably generates substrates for RQC. The protein is Endonuclease MutS2 of Streptococcus pneumoniae serotype 2 (strain D39 / NCTC 7466).